A 649-amino-acid chain; its full sequence is Acetylcholinesterase (649 aa).

An N-terminal signal peptide occupies residues Met1–Gly38. Cys104 and Cys131 form a disulfide bridge. N-linked (GlcNAc...) asparagine glycans are attached at residues Asn126 and Asn174. Catalysis depends on Ser276, which acts as the Acyl-ester intermediate. A disulfide bond links Cys330 and Cys345. Asn331 is a glycosylation site (N-linked (GlcNAc...) asparagine). Catalysis depends on charge relay system residues Glu405 and His518. An intrachain disulfide couples Cys480 to Cys598. N-linked (GlcNAc...) asparagine glycosylation occurs at Asn531. The GPI-anchor amidated serine moiety is linked to residue Ser619. A propeptide spans Gly620–Phe649 (removed in mature form).

The protein belongs to the type-B carboxylesterase/lipase family. As to quaternary structure, homodimer; disulfide-linked. The active unit is formed by non-covalent association of the 55 kDa and 16 kDa subunits. Post-translationally, proteolytic cleavage into the 16 kDa subunit and the 55 kDa subunits originates from the hydrophilic peptide, aa 148-180, and is associated with excretion out of the cell. Neither N-glycosylation nor dimerization is required for enzyme activity or substrate specificity, but protects the protein against proteolytic digestion.

It is found in the synapse. It localises to the cell membrane. The catalysed reaction is acetylcholine + H2O = choline + acetate + H(+). Its function is as follows. Rapidly hydrolyzes choline released into the synapse. It can hydrolyze butyrylthiocholine. The polypeptide is Acetylcholinesterase (Ace) (Drosophila melanogaster (Fruit fly)).